The chain runs to 524 residues: Serine/threonine-protein kinase PAK 2 (524 aa).

Residues 1–81 (MSDNGELEDK…PEISPPSDFE (81 aa)) are disordered. Residue serine 2 is modified to N-acetylserine. Phosphoserine occurs at positions 2, 20, 55, and 58. Threonine 60 bears the Phosphothreonine mark. Lysine 62 is subject to N6-acetyllysine. Residue serine 64 is modified to Phosphoserine. Residues 67-81 (KEKERPEISPPSDFE) are compositionally biased toward basic and acidic residues. A GTPase-binding region spans residues 69–112 (KERPEISPPSDFEHTIHVGFDAVTGEFTGMPEQWARLLQTSNIT). Positions 69 to 137 (KERPEISPPS…KFYDSNTVKQ (69 aa)) are autoregulatory region. In terms of domain architecture, CRIB spans 74–87 (ISPPSDFEHTIHVG). Lysine 128 carries the N6-acetyllysine modification. Threonine 134 carries the post-translational modification Phosphothreonine. Tyrosine 139 carries the phosphotyrosine modification. Position 141 is a phosphoserine (serine 141). Residues 142–188 (FTPPEKDGFPSGTPALNTKGSETSAVVTEEDDDDEDAAPPVIAPRPD) are disordered. Threonine 143 carries the phosphothreonine modification. Serine 152 carries the phosphoserine modification. Phosphothreonine is present on residues threonine 154, threonine 159, and threonine 169. Residues 155-167 (PALNTKGSETSAV) are compositionally biased toward polar residues. The segment covering 169–178 (TEEDDDDEDA) has biased composition (acidic residues). The residue at position 197 (serine 197) is a Phosphoserine. A disordered region spans residues 204–228 (APVGDSNVDSGAKSSDKQKKKAKMT). Positions 245–251 (PKKKYTR) match the Nuclear localization signal motif. The 251-residue stretch at 249–499 (YTRYEKIGQG…SAKELLQHPF (251 aa)) folds into the Protein kinase domain. ATP is bound by residues 255-263 (IGQGASGTV) and lysine 278. Residue arginine 367 is the Proton acceptor of the active site. Residue threonine 402 is modified to Phosphothreonine; by autocatalysis.

This sequence belongs to the protein kinase superfamily. STE Ser/Thr protein kinase family. STE20 subfamily. As to quaternary structure, interacts tightly with GTP-bound but not GDP-bound CDC42/p21 and RAC1. Interacts with SH3MD4. Interacts with SCRIB. Interacts with ARHGEF7 and GIT1. PAK-2p34 interacts with ARHGAP10. Interacts with RAC1. Full-length PAK2 is autophosphorylated when activated by CDC42/p21. Following cleavage, both peptides, PAK-2p27 and PAK-2p34, become highly autophosphorylated. Autophosphorylation of PAK-2p27 can occur in the absence of any effectors and is dependent on phosphorylation of Thr-402, because PAK-2p27 is acting as an exogenous substrate. In terms of processing, during apoptosis proteolytically cleaved by caspase-3 or caspase-3-like proteases to yield active PAK-2p34. Post-translationally, ubiquitinated, leading to its proteasomal degradation.

It localises to the cytoplasm. The protein localises to the nucleus. The protein resides in the perinuclear region. It is found in the membrane. The catalysed reaction is L-seryl-[protein] + ATP = O-phospho-L-seryl-[protein] + ADP + H(+). It carries out the reaction L-threonyl-[protein] + ATP = O-phospho-L-threonyl-[protein] + ADP + H(+). Activated by binding small G proteins. Binding of GTP-bound CDC42 or RAC1 to the autoregulatory region releases monomers from the autoinhibited dimer, enables phosphorylation of Thr-402 and allows the kinase domain to adopt an active structure. Following caspase cleavage, autophosphorylated PAK-2p34 is constitutively active. Its function is as follows. Serine/threonine protein kinase that plays a role in a variety of different signaling pathways including cytoskeleton regulation, cell motility, cell cycle progression, apoptosis or proliferation. Acts as a downstream effector of the small GTPases CDC42 and RAC1. Activation by the binding of active CDC42 and RAC1 results in a conformational change and a subsequent autophosphorylation on several serine and/or threonine residues. Full-length PAK2 stimulates cell survival and cell growth. Phosphorylates MAPK4 and MAPK6 and activates the downstream target MAPKAPK5, a regulator of F-actin polymerization and cell migration. Phosphorylates JUN and plays an important role in EGF-induced cell proliferation. Phosphorylates many other substrates including histone H4 to promote assembly of H3.3 and H4 into nucleosomes, BAD, ribosomal protein S6, or MBP. Phosphorylates CASP7, thereby preventing its activity. Additionally, associates with ARHGEF7 and GIT1 to perform kinase-independent functions such as spindle orientation control during mitosis. On the other hand, apoptotic stimuli such as DNA damage lead to caspase-mediated cleavage of PAK2, generating PAK-2p34, an active p34 fragment that translocates to the nucleus and promotes cellular apoptosis involving the JNK signaling pathway. Caspase-activated PAK2 phosphorylates MKNK1 and reduces cellular translation. In Mus musculus (Mouse), this protein is Serine/threonine-protein kinase PAK 2 (Pak2).